A 313-amino-acid polypeptide reads, in one-letter code: Oxaloacetate tautomerase Fahd2a, mitochondrial (313 aa).

A mitochondrion-targeting transit peptide spans 1–84; sequence MLGSGRRRLL…TALSVARRAL (84 aa). Mg(2+) is bound by residues Glu159, Glu161, and Asp190. At Lys202 the chain carries N6-acetyllysine; alternate. Lys202 carries the N6-succinyllysine; alternate modification. Lys233 is modified (N6-acetyllysine).

The protein belongs to the FAH family. It depends on Mg(2+) as a cofactor. The cofactor is Mn(2+).

It is found in the mitochondrion. It carries out the reaction oxaloacetate = enol-oxaloacetate. In terms of biological role, tautomerase that converts enol-oxaloacetate, a strong inhibitor of succinate dehydrogenase, to the physiological keto form of oxaloacetate. It is thereby required to maximize aerobic respiration efficiency by preventing succinate dehydrogenase inhibition. This chain is Oxaloacetate tautomerase Fahd2a, mitochondrial, found in Rattus norvegicus (Rat).